The following is a 488-amino-acid chain: Histamine H1 receptor (488 aa).

At 1–29 (MSLPNTSSASEDKMCEGNRTAMASPQLLP) the chain is on the extracellular side. N-linked (GlcNAc...) asparagine glycosylation is found at Asn-5 and Asn-18. A helical transmembrane segment spans residues 30–50 (LVVVLSSISLVTVGLNLLVLY). The Cytoplasmic portion of the chain corresponds to 51–64 (AVRSERKLHTVGNL). The chain crosses the membrane as a helical span at residues 65-89 (YIVSLSVADLIVGAVVMPMNILYLI). Over 90–97 (MTKWSLGR) the chain is Extracellular. A helical transmembrane segment spans residues 98–123 (PLCLFWLSMDYVASTASIFSVFILCI). Cys-100 and Cys-180 form a disulfide bridge. Histamine is bound by residues Asp-107 and Thr-112. Residues 107-112 (DYVAST) form an important for agonist binding region. Residues 124–144 (DRYRSVQQPLRYLRYRTKTRA) lie on the Cytoplasmic side of the membrane. Phosphothreonine is present on residues Thr-140 and Thr-142. Residues 145–164 (SATILGAWFLSFLWVIPILG) form a helical membrane-spanning segment. Over 165–188 (WHHFTPLAPELREDKCETDFYNVT) the chain is Extracellular. The helical transmembrane segment at 189–211 (WFKIMTAIINFYLPTLLMLWFYV) threads the bilayer. Position 198 (Asn-198) interacts with histamine. Residues 212–417 (KIYKAVRRHC…LNRERKAAKQ (206 aa)) are Cytoplasmic-facing. At Ser-230 the chain carries Phosphoserine. The segment at 245–337 (KEGAKKPGKE…SQPKMDEQSL (93 aa)) is disordered. The segment covering 322 to 337 (ANDQTLSQPKMDEQSL) has biased composition (polar residues). Ser-344, Ser-347, Ser-381, Ser-383, Ser-397, and Ser-399 each carry phosphoserine. A helical transmembrane segment spans residues 418–441 (LGCIMAAFILCWIPYFIFFMVIAF). Residues 425–429 (FILCW) are important for agonist binding. A histamine-binding site is contributed by Tyr-432. Cysteines 442 and 445 form a disulfide. The Extracellular portion of the chain corresponds to 442 to 447 (CNSCCS). The helical transmembrane segment at 448–470 (EPVHMFTIWLGYINSTLNPLIYP) threads the bilayer. At 471–488 (LCNENFKKTFKKILHIRS) the chain is on the cytoplasmic side.

This sequence belongs to the G-protein coupled receptor 1 family. Post-translationally, phosphorylation at sites in the second and third cytoplasmic loops independently contribute to agonist-induced receptor down-regulation.

The protein resides in the cell membrane. Its function is as follows. G-protein-coupled receptor for histamine, a biogenic amine that functions as an immune modulator and a neurotransmitter. Through the H1 receptor, histamine mediates the contraction of smooth muscles and increases capillary permeability due to contraction of terminal venules. Also mediates neurotransmission in the central nervous system and thereby regulates circadian rhythms, emotional and locomotor activities as well as cognitive functions. This chain is Histamine H1 receptor, found in Mus musculus (Mouse).